A 521-amino-acid polypeptide reads, in one-letter code: Vang-like protein 2-A (521 aa).

The interval 1-81 (MDNDSQYSGY…TTVVTGTSEH (81 aa)) is disordered. Topologically, residues 1–108 (MDNDSQYSGY…AKLDCSRHLG (108 aa)) are cytoplasmic. The segment covering 15–33 (GHSRSSRKHRDRRERHRSK) has biased composition (basic residues). Basic and acidic residues predominate over residues 57–67 (ESTRGEDRDDN). The segment covering 69-81 (GETTTVVTGTSEH) has biased composition (low complexity). The chain crosses the membrane as a helical span at residues 109–129 (VVIGGALALLSFLTPIAFMLL). Residues 130–147 (PQILWREDLEQCGTACEG) are Extracellular-facing. A helical transmembrane segment spans residues 148–168 (LFISVAFKLLILLLGSWALFF). Over 169-178 (RRPKAFFPRV) the chain is Cytoplasmic. Residues 179-199 (FVFRALLMVLVFLLVVSYWLF) form a helical membrane-spanning segment. Topologically, residues 200 to 218 (YGVRILESRDKNYQGIVQY) are extracellular. Residues 219-239 (AVSLVDALLFVHYLAVVLLEL) form a helical membrane-spanning segment. The Cytoplasmic segment spans residues 240 to 521 (RQLQPQFTIK…VMRLQSETSV (282 aa)). The short motif at 518-521 (ETSV) is the PDZ-binding element.

This sequence belongs to the Vang family. Interacts with dvl/dsh. Interacts with prickle3. As to expression, during gastrulation, broadly expressed throughout the marginal zone and animal cap region. From the neurula stages, expression becomes concentrated in neural tissues, in the neural plate and neural tube.

It is found in the cell membrane. In terms of biological role, has a role in non-canonical Wnt/planar cell polarity (PCP) signaling; can recruit dvl/dsh and prickle from the cytoplasm to the plasma membrane. Acts in a PCP complex to regulate the polarized assembly of fibronectrin on the surface of the mesoderm during gastrulation. Regulates convergent extension cell movements in both dorsal mesoderm and neural tissue during gastrulation, without affecting cell fate. Regulates neural fold closure during neurulation. May be required for cell surface localization of fzd3 and fzd6 in the inner ear. This chain is Vang-like protein 2-A (vangl2-a), found in Xenopus laevis (African clawed frog).